The primary structure comprises 264 residues: Thymidylate synthase (264 aa).

Residue R21 coordinates dUMP. Residue H51 coordinates (6R)-5,10-methylene-5,6,7,8-tetrahydrofolate. A dUMP-binding site is contributed by 126-127 (RR). Residue C146 is the Nucleophile of the active site. Residues 166 to 169 (RSAD), N177, and 207 to 209 (HLY) each bind dUMP. D169 is a (6R)-5,10-methylene-5,6,7,8-tetrahydrofolate binding site. A (6R)-5,10-methylene-5,6,7,8-tetrahydrofolate-binding site is contributed by A263.

It belongs to the thymidylate synthase family. Bacterial-type ThyA subfamily. As to quaternary structure, homodimer.

The protein localises to the cytoplasm. It catalyses the reaction dUMP + (6R)-5,10-methylene-5,6,7,8-tetrahydrofolate = 7,8-dihydrofolate + dTMP. Its pathway is pyrimidine metabolism; dTTP biosynthesis. In terms of biological role, catalyzes the reductive methylation of 2'-deoxyuridine-5'-monophosphate (dUMP) to 2'-deoxythymidine-5'-monophosphate (dTMP) while utilizing 5,10-methylenetetrahydrofolate (mTHF) as the methyl donor and reductant in the reaction, yielding dihydrofolate (DHF) as a by-product. This enzymatic reaction provides an intracellular de novo source of dTMP, an essential precursor for DNA biosynthesis. The polypeptide is Thymidylate synthase (Azotobacter vinelandii (strain DJ / ATCC BAA-1303)).